The following is a 2376-amino-acid chain: Protein Ycf2 (2376 aa).

Disordered regions lie at residues 173 to 194 (SSQL…GTED), 226 to 256 (TEIE…EMNN), and 952 to 1011 (KRKK…KRKE). Low complexity predominate over residues 235-245 (KGLSGSSSKSR). Composition is skewed to basic and acidic residues over residues 246–255 (LFTEGEKEMN) and 960–1009 (KRKE…PEKR). 1441 to 1448 (GSIGSGRS) serves as a coordination point for ATP. Disordered regions lie at residues 1515–1534 (YEDR…DYEP), 1860–2046 (LVGS…LRPK), and 2112–2230 (PAEE…DGFS). Over residues 1866 to 2025 (TEEEVEGTEE…GEGTEDEEGE (160 aa)) the composition is skewed to acidic residues. Basic and acidic residues predominate over residues 2026–2038 (GTEKDSSQFDNDR). Acidic residues-rich tracts occupy residues 2112 to 2129 (PAEE…EALE) and 2136 to 2213 (GEEE…ENDS).

This sequence belongs to the Ycf2 family.

The protein localises to the plastid. The protein resides in the chloroplast stroma. In terms of biological role, probable ATPase of unknown function. Its presence in a non-photosynthetic plant (Epifagus virginiana) and experiments in tobacco indicate that it has an essential function which is probably not related to photosynthesis. The chain is Protein Ycf2 from Oenothera glazioviana (Large-flowered evening primrose).